We begin with the raw amino-acid sequence, 904 residues long: MICAL-like protein 2 (904 aa).

One can recognise a Calponin-homology (CH) domain in the interval 1–107 (MAAIRALQQW…YVSQYYNYFH (107 aa)). Residues 1-260 (MAAIRALQQW…KLTGLVPRQP (260 aa)) are forms an intramolecular interaction with the C-terminal coiled coil domain keeping the protein in a closed conformation. Serine 110, serine 143, and serine 153 each carry phosphoserine. A disordered region spans residues 117–178 (GVKRASEDSE…GGPPPKTDQA (62 aa)). The span at 143 to 153 (SPAPARKPPLS) shows a compositional bias: pro residues. Positions 186–248 (STCGVCGKHV…TSHLPAAASA (63 aa)) constitute an LIM zinc-binding domain. Serine 249 is subject to Phosphoserine. The disordered stretch occupies residues 251–722 (KLTGLVPRQP…PANVPALPGE (472 aa)). Positions 261-388 (GAMGVDSRTS…GGAPRVAAPQ (128 aa)) are necessary and sufficient for interaction with actinins. The tract at residues 261–697 (GAMGVDSRTS…EARVQSWKEE (437 aa)) is mediates targeting to the cell plasma membrane. Polar residues predominate over residues 267–277 (SRTSCSPQKAQ). Low complexity-rich tracts occupy residues 293–314 (NSPA…ATSV) and 349–362 (SSAA…ASHP). Position 294 is a phosphoserine (serine 294). Residues 363–374 (AVPPSAPDPRPA) are compositionally biased toward pro residues. Residues 385 to 400 (AAPQTTLSSSSTSAAT) show a composition bias toward low complexity. Over residues 408–433 (PSASRTQQARNKFFQTSAVPPGTSLS) the composition is skewed to polar residues. The segment covering 459-480 (ALSALEEAGAPAPGRPSPATAA) has biased composition (low complexity). Phosphoserine is present on residues serine 494 and serine 504. Low complexity-rich tracts occupy residues 520 to 534 (LSTS…LPPA) and 542 to 553 (SSGVGRVGAGSR). A compositionally biased stretch (polar residues) spans 564–578 (KSTTLTQDMSTSLQE). Over residues 593–622 (PVDRRSPAERTLKPKEPRALAEPRAGEAPR) the composition is skewed to basic and acidic residues. Serine 598 carries the phosphoserine modification. Threonine 644 is subject to Phosphothreonine. The segment covering 647–661 (PASPGPSLPARSPSP) has biased composition (pro residues). Phosphoserine is present on residues serine 649, serine 658, serine 660, and serine 726. The tract at residues 698–807 (EKKPHLQGKP…LMYKSKAQRL (110 aa)) is forms an intramolecular interaction with the N-terminal Calponin-homology and LIM zinc-binding domains-containing region keeping the protein in a closed conformation. The 152-residue stretch at 723 to 874 (TVTSPVRLHP…EQEEDQMLRD (152 aa)) folds into the bMERB domain. The stretch at 735–771 (LSPEEIQRQLQDIERRLDALELRGVELEKRLRAAEGD) forms a coiled coil. Residues 807–903 (LEEQQLDIEG…WSPKSKSSPS (97 aa)) are mediates interaction with RAB13 and is required for transition from the closed to the opened conformation.

In terms of assembly, interacts with RAB13 (GTP-bound form); competes with RAB8A and is involved in tight junctions assembly. Interacts with RAB8A; competes with RAB13 and is involved in E-cadherin endocytic recycling. Interacts with RAB8B. Interacts (preferentially in opened conformation) with ACTN1 and ACTN4; stimulated by RAB13 activation. Interacts (via calponin-homology (CH) domain) with the filamins FLNA, FLNB and FLNC (via actin-binding domain).

It localises to the cell membrane. It is found in the cell junction. Its subcellular location is the tight junction. The protein localises to the recycling endosome. The protein resides in the cell projection. It localises to the cytoplasm. It is found in the cytoskeleton. Functionally, effector of small Rab GTPases which is involved in junctional complexes assembly through the regulation of cell adhesion molecules transport to the plasma membrane and actin cytoskeleton reorganization. Regulates the endocytic recycling of occludins, claudins and E-cadherin to the plasma membrane and may thereby regulate the establishment of tight junctions and adherens junctions. In parallel, may regulate actin cytoskeleton reorganization directly through interaction with F-actin or indirectly through actinins and filamins. Most probably involved in the processes of epithelial cell differentiation, cell spreading and neurite outgrowth. Undergoes liquid-liquid phase separation to form tubular recycling endosomes. Plays 2 sequential roles in the biogenesis of tubular recycling endosomes: first organizes phase separation and then the closed form formed by interaction with RAB8A promotes endosomal tubulation. The chain is MICAL-like protein 2 from Homo sapiens (Human).